The primary structure comprises 549 residues: Oxygen-dependent choline dehydrogenase (549 aa).

Position 4-33 (4-33 (DYIIIGSGSAGSALAHRLSEDSRNSVIVLE)) interacts with FAD. The Proton acceptor role is filled by H465.

It belongs to the GMC oxidoreductase family. Requires FAD as cofactor.

It catalyses the reaction choline + A = betaine aldehyde + AH2. The catalysed reaction is betaine aldehyde + NAD(+) + H2O = glycine betaine + NADH + 2 H(+). The protein operates within amine and polyamine biosynthesis; betaine biosynthesis via choline pathway; betaine aldehyde from choline (cytochrome c reductase route): step 1/1. Involved in the biosynthesis of the osmoprotectant glycine betaine. Catalyzes the oxidation of choline to betaine aldehyde and betaine aldehyde to glycine betaine at the same rate. The sequence is that of Oxygen-dependent choline dehydrogenase from Sinorhizobium fredii (strain NBRC 101917 / NGR234).